We begin with the raw amino-acid sequence, 373 residues long: Probable di-N-acetylchitobiase 1 (373 aa).

The first 20 residues, 1–20 (MKIFIIISLILTILIIQSKS), serve as a signal peptide directing secretion. The 349-residue stretch at 21 to 369 (KECPCSNVEL…SGMWGALNSF (349 aa)) folds into the GH18 domain. Asparagine 48 is a glycosylation site (N-linked (GlcNAc...) asparagine). Residues 53–54 (PY) and 82–85 (NGVR) contribute to the chitin site. N-linked (GlcNAc...) asparagine glycosylation occurs at asparagine 99. Glutamate 127 (proton donor) is an active-site residue. Residues tyrosine 128 and 191–194 (MDYD) each bind chitin. N-linked (GlcNAc...) asparagine glycosylation is found at asparagine 222, asparagine 250, asparagine 269, asparagine 279, and asparagine 288. Tryptophan 347 is a binding site for chitin.

Belongs to the glycosyl hydrolase 18 family.

It is found in the lysosome. Involved in the degradation of asparagine-linked glycoproteins. May hydrolyze of N-acetyl-beta-D-glucosamine (1-4)N-acetylglucosamine chitobiose core from the reducing end of the bond. The sequence is that of Probable di-N-acetylchitobiase 1 (ctbs1) from Dictyostelium discoideum (Social amoeba).